Consider the following 264-residue polypeptide: Thymidylate synthase (264 aa).

Residues Arg21 and 126–127 (RR) each bind dUMP. Cys146 acts as the Nucleophile in catalysis. Residues 166 to 169 (RSAD), Asn177, and 207 to 209 (HLY) contribute to the dUMP site. Asp169 lines the (6R)-5,10-methylene-5,6,7,8-tetrahydrofolate pocket. (6R)-5,10-methylene-5,6,7,8-tetrahydrofolate is bound at residue Ala263.

It belongs to the thymidylate synthase family. Bacterial-type ThyA subfamily. As to quaternary structure, homodimer.

Its subcellular location is the cytoplasm. The enzyme catalyses dUMP + (6R)-5,10-methylene-5,6,7,8-tetrahydrofolate = 7,8-dihydrofolate + dTMP. It participates in pyrimidine metabolism; dTTP biosynthesis. Its function is as follows. Catalyzes the reductive methylation of 2'-deoxyuridine-5'-monophosphate (dUMP) to 2'-deoxythymidine-5'-monophosphate (dTMP) while utilizing 5,10-methylenetetrahydrofolate (mTHF) as the methyl donor and reductant in the reaction, yielding dihydrofolate (DHF) as a by-product. This enzymatic reaction provides an intracellular de novo source of dTMP, an essential precursor for DNA biosynthesis. This chain is Thymidylate synthase, found in Halorhodospira halophila (strain DSM 244 / SL1) (Ectothiorhodospira halophila (strain DSM 244 / SL1)).